The following is a 224-amino-acid chain: Orotidine 5'-phosphate decarboxylase (224 aa).

Residues Asp-10, Lys-32, 59–68, Thr-115, Arg-175, Gln-184, Gly-204, and Arg-205 each bind substrate; that span reads DLKLHDIPNT. Lys-61 (proton donor) is an active-site residue.

This sequence belongs to the OMP decarboxylase family. Type 1 subfamily. As to quaternary structure, homodimer.

The catalysed reaction is orotidine 5'-phosphate + H(+) = UMP + CO2. It participates in pyrimidine metabolism; UMP biosynthesis via de novo pathway; UMP from orotate: step 2/2. In terms of biological role, catalyzes the decarboxylation of orotidine 5'-monophosphate (OMP) to uridine 5'-monophosphate (UMP). The chain is Orotidine 5'-phosphate decarboxylase from Novosphingobium aromaticivorans (strain ATCC 700278 / DSM 12444 / CCUG 56034 / CIP 105152 / NBRC 16084 / F199).